Consider the following 261-residue polypeptide: Arcelin-5A (261 aa).

A signal peptide spans 1-21 (MASSKLLSLALFLVLLTHANS). Residues N43, N91, and N100 are each glycosylated (N-linked (GlcNAc...) asparagine). A disulfide bridge links C167 with C203. A propeptide spanning residues 255–261 (ILLNNIL) is cleaved from the precursor.

Belongs to the leguminous lectin family. As to quaternary structure, monomer. In terms of processing, the C-terminal segment appears to be highly susceptible to proteolysis.

Functionally, seed storage. This carbohydrate-binding lectin has toxic effects on bean bruchid pests. This Phaseolus vulgaris (Kidney bean) protein is Arcelin-5A (ARC5A).